The sequence spans 138 residues: Basic phospholipase A2 ammodytoxin B (138 aa).

The N-terminal stretch at 1–16 is a signal peptide; it reads MRTLWIVAVCLIGVEG. Cystine bridges form between cysteine 42-cysteine 131, cysteine 44-cysteine 60, cysteine 59-cysteine 111, cysteine 65-cysteine 138, cysteine 66-cysteine 104, cysteine 73-cysteine 97, and cysteine 91-cysteine 102. The Ca(2+) site is built by tyrosine 43, glycine 45, and glycine 47. The active site involves histidine 63. Aspartate 64 contributes to the Ca(2+) binding site. Aspartate 105 is an active-site residue.

This sequence belongs to the phospholipase A2 family. Group II subfamily. D49 sub-subfamily. In terms of assembly, monomer. Binds to calmodulin, coagulation factor X (F10), M-type PLA2 receptor (R-180), 14-3-3 proteins gamma (YWHAG) and epsilon (YWHAE), and R25, a mitochondrial membrane protein. Requires Ca(2+) as cofactor. Expressed by the venom gland.

The protein localises to the secreted. The protein resides in the host cytoplasm. It is found in the host cytosol. The enzyme catalyses a 1,2-diacyl-sn-glycero-3-phosphocholine + H2O = a 1-acyl-sn-glycero-3-phosphocholine + a fatty acid + H(+). Its function is as follows. Snake venom phospholipase A2 (PLA2) that acts as a presynaptic neurotoxin, an inhibitor of blood coagulation, and has been found to bind with high affinity to intracellular proteins. The response of indirectly stimulated neuromuscular preparations to ammodytoxin (Atx) is triphasic. The first phase, the transient inhibition of the acetylcholine (ACh) release, starts soon after the addition of Atx and lasts for several minutes. This phase is probably independent of Atx enzymatic activity. The effect may be due to the specific binding of the toxin to presynaptic receptors. These receptors, called N-type receptors, are still unidentified. It is noteworthy that a neuronal isoform of the M-type PLA2 receptor (R180) has been identified as a high-affinity receptor for Atx in neuronal plasma membranes. It was demonstrated however that this receptor is not essential for expression of neurotoxicity by Atx. The second phase corresponds to an augmentation of neurotransmitter release. A peak is reached 10-20 minutes after exposure of the preparation to Atx and is followed by a gradual reduction. In this phase, the enzymatic activity of Atx of the mammalian is not significant. It is speculated that the increased release of neurotransmitter in this phase is induced by the interference of Atx with voltage-gated potassium channels. Measurements of ionic currents showed however that voltage-gated potassium channels are not affected by Atx. The third phase of the response of neuromuscular preparations to Atx, which corresponds to a complete and irreversible paralysis, is clearly dependent on the hydrolytic activity of the toxin. In addition to its presynaptic neurotoxicity, Atx shows an anticoagulant activity by binding with high affinity to activated coagulation factor X (F10) thus inhibiting the formation of the prothrombinase complex (FX/FV) and its activity (IC(50) is 82 nM). Surprisingly, Atx was discovered to bind intracellular proteins such as calmodulin (CaM), 14-3-3 proteins gamma (YWHAG) and epsilon (YWHAE) (by similarity with AtxC), as well as R25 (by similarity with AtxC), a mitochondrial integral membrane protein found in cerebral cortex. These findings raised a doubt about the dogma of the exclusively extracellular action of PLA2s, defended by the potential instability of these molecules in the reducing environment of the eukaryotic cytosol coupled with their possible inability to act as enzymes in this cellular compartment, due to too low concentration of calcium ions. This hypothesis was challenged efficiently by demonstrating the internalization of AtxA into a culture cells, but still remains to be directly demonstrated in vivo. PLA2 catalyzes the calcium-dependent hydrolysis of the 2-acyl groups in 3-sn-phosphoglycerides. This Vipera ammodytes ammodytes (Western sand viper) protein is Basic phospholipase A2 ammodytoxin B.